The chain runs to 876 residues: Alanine--tRNA ligase (876 aa).

The Zn(2+) site is built by histidine 562, histidine 566, cysteine 666, and histidine 670.

The protein belongs to the class-II aminoacyl-tRNA synthetase family. Requires Zn(2+) as cofactor.

Its subcellular location is the cytoplasm. It carries out the reaction tRNA(Ala) + L-alanine + ATP = L-alanyl-tRNA(Ala) + AMP + diphosphate. Functionally, catalyzes the attachment of alanine to tRNA(Ala) in a two-step reaction: alanine is first activated by ATP to form Ala-AMP and then transferred to the acceptor end of tRNA(Ala). Also edits incorrectly charged Ser-tRNA(Ala) and Gly-tRNA(Ala) via its editing domain. The sequence is that of Alanine--tRNA ligase from Marinobacter nauticus (strain ATCC 700491 / DSM 11845 / VT8) (Marinobacter aquaeolei).